The primary structure comprises 396 residues: Elongation factor Tu (396 aa).

The tr-type G domain maps to 10-206 (KPHVNIGTIG…AVDEYIPTPQ (197 aa)). The interval 19-26 (GHVDHGKT) is G1. Residue 19 to 26 (GHVDHGKT) coordinates GTP. Thr-26 is a binding site for Mg(2+). Residues 60 to 64 (GITIS) are G2. A G3 region spans residues 81-84 (DCPG). Residues 81-85 (DCPGH) and 136-139 (NKVD) contribute to the GTP site. A G4 region spans residues 136–139 (NKVD). Positions 174 to 176 (SAL) are G5.

It belongs to the TRAFAC class translation factor GTPase superfamily. Classic translation factor GTPase family. EF-Tu/EF-1A subfamily. In terms of assembly, monomer.

The protein localises to the cytoplasm. The catalysed reaction is GTP + H2O = GDP + phosphate + H(+). GTP hydrolase that promotes the GTP-dependent binding of aminoacyl-tRNA to the A-site of ribosomes during protein biosynthesis. The chain is Elongation factor Tu from Stigmatella aurantiaca.